An 872-amino-acid polypeptide reads, in one-letter code: Alanine--tRNA ligase (872 aa).

H566, H570, C668, and H672 together coordinate Zn(2+).

It belongs to the class-II aminoacyl-tRNA synthetase family. The cofactor is Zn(2+).

It localises to the cytoplasm. It carries out the reaction tRNA(Ala) + L-alanine + ATP = L-alanyl-tRNA(Ala) + AMP + diphosphate. Its function is as follows. Catalyzes the attachment of alanine to tRNA(Ala) in a two-step reaction: alanine is first activated by ATP to form Ala-AMP and then transferred to the acceptor end of tRNA(Ala). Also edits incorrectly charged Ser-tRNA(Ala) and Gly-tRNA(Ala) via its editing domain. The polypeptide is Alanine--tRNA ligase (Lactococcus lactis subsp. cremoris (strain MG1363)).